The following is a 347-amino-acid chain: Virulence plasmid protein pGP2-D (347 aa).

This is Virulence plasmid protein pGP2-D from Chlamydia psittaci (Chlamydophila psittaci).